Reading from the N-terminus, the 479-residue chain is Ribulose bisphosphate carboxylase large chain (479 aa).

Positions 1 to 2 (MS) are excised as a propeptide. Positions 123 and 173 each coordinate substrate. The active-site Proton acceptor is the Lys175. Residue Lys177 coordinates substrate. The Mg(2+) site is built by Lys201, Asp203, and Glu204. At Lys201 the chain carries N6-carboxylysine. Residue Ser208 is modified to Phosphoserine. Residue His294 is the Proton acceptor of the active site. Substrate-binding residues include Arg295 and His327. Thr330 is subject to Phosphothreonine. Ser379 serves as a coordination point for substrate.

Belongs to the RuBisCO large chain family. Type I subfamily. As to quaternary structure, heterohexadecamer of 8 large chains and 8 small chains; disulfide-linked. The disulfide link is formed within the large subunit homodimers. Mg(2+) is required as a cofactor. In terms of processing, the disulfide bond which can form in the large chain dimeric partners within the hexadecamer appears to be associated with oxidative stress and protein turnover.

It localises to the plastid. Its subcellular location is the chloroplast. The catalysed reaction is 2 (2R)-3-phosphoglycerate + 2 H(+) = D-ribulose 1,5-bisphosphate + CO2 + H2O. It carries out the reaction D-ribulose 1,5-bisphosphate + O2 = 2-phosphoglycolate + (2R)-3-phosphoglycerate + 2 H(+). Functionally, ruBisCO catalyzes two reactions: the carboxylation of D-ribulose 1,5-bisphosphate, the primary event in carbon dioxide fixation, as well as the oxidative fragmentation of the pentose substrate in the photorespiration process. Both reactions occur simultaneously and in competition at the same active site. The protein is Ribulose bisphosphate carboxylase large chain of Lobularia maritima (Sweet alyssum).